The chain runs to 361 residues: Cell cycle control protein 50A (361 aa).

The tract at residues 1-28 (MAMNYNAKDEVDGGPPCPPGGTAKTRRP) is disordered. N-acetylalanine is present on alanine 2. Residues 2-48 (AMNYNAKDEVDGGPPCPPGGTAKTRRPDNTAFKQQRLPAWQPILTAG) are required for ATPase and aminophospholipid flippase activity. The Cytoplasmic portion of the chain corresponds to 2–49 (AMNYNAKDEVDGGPPCPPGGTAKTRRPDNTAFKQQRLPAWQPILTAGT). Residues 49–348 (TVLPTFFIIG…LGVVLLVINH (300 aa)) form an interaction with ATP8A2 region. The chain crosses the membrane as a helical span at residues 50–70 (VLPTFFIIGLIFIPIGIGIFV). The Exoplasmic loop portion of the chain corresponds to 71-325 (TSNNIREIEI…SWMGGKNPFL (255 aa)). Cystine bridges form between cysteine 91-cysteine 104, cysteine 94-cysteine 102, and cysteine 157-cysteine 171. Asparagine 180, asparagine 190, and asparagine 294 each carry an N-linked (GlcNAc...) asparagine glycan. The helical transmembrane segment at 326-346 (GIAYITIGSISFLLGVVLLVI) threads the bilayer. Topologically, residues 347–361 (NHKYRNSSNTADITI) are cytoplasmic.

Belongs to the CDC50/LEM3 family. As to quaternary structure, component of various P4-ATPase flippase complexes which consists of a catalytic alpha subunit and an accessory beta subunit. Interacts with ATP8A1 to form a flippase complex; this complex forms an intermediate phosphoenzyme. Interacts with ATP8A2 to form a flippase complex. ATP8B1:TMEM30A and ATP8B2:TMEM30A flippase complexes have been shown to form intermediate phosphoenzymes in vitro. Interacts with alpha subunits ATP8A1, ATP8B1, ATP8B2, ATP8B4, ATP10A, ATP10B, ATP10D, ATP11A, ATP11B and ATP11C. Post-translationally, N-glycosylated; contributes to ATP8A2:TMEM30A flippase complex assembly but not to functional activity. Expressed in photoreceptor cells; detected in retina outer segment and other retinal layers (at protein level).

Its subcellular location is the membrane. It is found in the golgi apparatus. It localises to the cytoplasmic vesicle. The protein resides in the secretory vesicle membrane. The protein localises to the apical cell membrane. Its subcellular location is the photoreceptor inner segment. It is found in the cell projection. It localises to the cilium. The protein resides in the photoreceptor outer segment. Functionally, accessory component of a P4-ATPase flippase complex which catalyzes the hydrolysis of ATP coupled to the transport of aminophospholipids from the outer to the inner leaflet of various membranes and ensures the maintenance of asymmetric distribution of phospholipids. Phospholipid translocation also seems to be implicated in vesicle formation and in uptake of lipid signaling molecules. The beta subunit may assist in binding of the phospholipid substrate. Required for the proper folding, assembly and ER to Golgi exit of the ATP8A2:TMEM30A flippase complex. ATP8A2:TMEM30A may be involved in regulation of neurite outgrowth, and, reconstituted to liposomes, predomiminantly transports phosphatidylserine (PS) and to a lesser extent phosphatidylethanolamine (PE). The ATP8A1:TMEM30A flippase complex seems to play a role in regulation of cell migration probably involving flippase-mediated translocation of phosphatidylethanolamine (PE) at the plasma membrane. Required for the formation of the ATP8A2, ATP8B1 and ATP8B2 P-type ATPAse intermediate phosphoenzymes. Involved in uptake of platelet-activating factor (PAF). Can also mediate the export of alpha subunits ATP8A1, ATP8B1, ATP8B2, ATP8B4, ATP10A, ATP10B, ATP10D, ATP11A, ATP11B and ATP11C from the ER to other membrane localizations. The polypeptide is Cell cycle control protein 50A (Bos taurus (Bovine)).